We begin with the raw amino-acid sequence, 327 residues long: Probable cell division protein WhiA (327 aa).

Positions 275-308 (SLEELGRLADPQMTKDAVAGRIRRLLTMADKRAE) form a DNA-binding region, H-T-H motif.

Belongs to the WhiA family.

Involved in cell division and chromosome segregation. In Corynebacterium glutamicum (strain R), this protein is Probable cell division protein WhiA.